The sequence spans 321 residues: MATGGQQKENTLLHLFAGGCGGTVGAIFTCPLEVIKTRLQSSRLALRTVYYPQVHLGTISGAGMVRPTSVTPGLFQVLKSILEKEGPKSLFRGLGPNLVGVAPSRAVYFACYSKAKEQFNGIFVPNSNIVHIFSAGSAAFITNSLMNPIWMVKTRMQLEQKVRGSKQMNTLQCARYVYQTEGIRGFYRGLTASYAGISETIICFAIYESLKKYLKEAPLASSANGTEKNSTSFFGLMAAAALSKGCASCIAYPHEVIRTRLREEGTKYKSFVQTARLVFREEGYLAFYRGLFAQLIRQIPNTAIVLSTYELIVYLLEDRTQ.

Solcar repeat units lie at residues 9-118 (ENTL…AKEQ), 126-213 (NSNI…LKKY), and 231-315 (TSFF…IVYL). 6 consecutive transmembrane segments (helical) span residues 12-32 (LLHL…TCPL), 49-65 (VYYP…AGMV), 121-141 (GIFV…AAFI), 190-210 (LTAS…YESL), 233-253 (FFGL…IAYP), and 298-318 (QIPN…LLED).

It belongs to the mitochondrial carrier (TC 2.A.29) family. In terms of tissue distribution, expressed in the central nervous system. Also expressed in testis and skeletal muscle. Weakly expressed in heart, liver, kidney, prostate, colon and peripheral blood leukocytes.

The protein localises to the mitochondrion inner membrane. The catalysed reaction is UTP(in) + UDP(out) = UTP(out) + UDP(in). It carries out the reaction dUTP(out) + UTP(in) = dUTP(in) + UTP(out). It catalyses the reaction 5-methyl-UTP(out) + UTP(in) = 5-methyl-UTP(in) + UTP(out). The enzyme catalyses 5-methyl-UDP(out) + UTP(in) = 5-methyl-UDP(in) + UTP(out). The catalysed reaction is UTP(in) + CTP(out) = UTP(out) + CTP(in). It carries out the reaction CDP(out) + UTP(in) = CDP(in) + UTP(out). It catalyses the reaction dCTP(out) + UTP(in) = dCTP(in) + UTP(out). The enzyme catalyses dCDP(out) + UTP(in) = dCDP(in) + UTP(out). The catalysed reaction is UTP(in) + GTP(out) = UTP(out) + GTP(in). It carries out the reaction UTP(in) + GDP(out) = UTP(out) + GDP(in). It catalyses the reaction dGTP(out) + UTP(in) = dGTP(in) + UTP(out). The enzyme catalyses dGDP(out) + UTP(in) = dGDP(in) + UTP(out). The catalysed reaction is ITP(out) + UTP(in) = ITP(in) + UTP(out). With respect to regulation, inhibited by pyridoxal 5'-phosphate, 4,7-diphenyl-1,10-phenanthroline, tannic acid, and mercurials (mercury dichloride, mersalyl acid, p-hydroxymercuribenzoate). Functionally, mitochondrial transporter that imports/exports pyrimidine nucleotides into and from mitochondria. Selectively transports uridine, thymidine, guanosine, cytosine and inosine (deoxy)nucleoside di- and triphosphates by an antiport mechanism. May import (deoxy)nucleoside triphosphates in exchange for intramitochondrial (deoxy)nucleoside diphosphates, thus providing precursors necessary for de novo synthesis of mitochondrial DNA and RNA while exporting products of their catabolism. Participates in mitochondrial genome maintenance, regulation of mitochondrial membrane potential and mitochondrial respiration. Upon INS or IGF1 stimulation regulates cell growth and proliferation by controlling mitochondrial DNA replication and transcription, the ratio of mitochondria-to nuclear-encoded components of the electron transport chain resulting in control of mitochondrial ROS production. Participates in dendritic cell endocytosis and may associate with mitochondrial oxidative phosphorylation. The protein is Solute carrier family 25 member 33 (SLC25A33) of Homo sapiens (Human).